A 235-amino-acid polypeptide reads, in one-letter code: MSDSTDISGITVDGRLHSMDSGLTERQRTILNVIRASVTSRGYPPSIREIADAVGLTSTSSVAHQLRTLERKGYLRRDPNRPRAVNVRGVEETQAAGPAVLTEVAGSDVLPEPTFVPILGRIAAGSPIFAEGTVEDIFPLPRELVGEGTLFLLKVTGDSMVEAAICDGDWVVVRQQKVADNGDIVAAMIDGEATVKTFKRAGGQVWLIPHNPAFDPIPGNDATVLGKVVTVIRKI.

The H-T-H motif DNA-binding region spans 47–67 (IREIADAVGLTSTSSVAHQLR). Residues Ser159 and Lys196 each act as for autocatalytic cleavage activity in the active site.

The protein belongs to the peptidase S24 family. Homodimer.

The enzyme catalyses Hydrolysis of Ala-|-Gly bond in repressor LexA.. Functionally, represses a number of genes involved in the response to DNA damage (SOS response), including recA and lexA. In the presence of single-stranded DNA, RecA interacts with LexA causing an autocatalytic cleavage which disrupts the DNA-binding part of LexA, leading to derepression of the SOS regulon and eventually DNA repair. This chain is LexA repressor, found in Mycobacterium leprae (strain Br4923).